The primary structure comprises 367 residues: Peptide chain release factor 2 (367 aa).

Gln-250 carries the N5-methylglutamine modification.

Belongs to the prokaryotic/mitochondrial release factor family. Post-translationally, methylated by PrmC. Methylation increases the termination efficiency of RF2.

The protein localises to the cytoplasm. In terms of biological role, peptide chain release factor 2 directs the termination of translation in response to the peptide chain termination codons UGA and UAA. This is Peptide chain release factor 2 from Chloroflexus aggregans (strain MD-66 / DSM 9485).